The sequence spans 1107 residues: Ubiquitin-associated protein 2-like (1107 aa).

N-acetylmethionine is present on Met-1. Positions 1–33 are disordered; it reads MMTSVGTNRARGNWEQPQNQNQTQHKQRPQATA. The region spanning 49-89 is the UBA domain; the sequence is DFEEKVKQLIDITGKNQDECVIALHDCNGDVNRAINVLLEG. A disordered region spans residues 92–229; that stretch reads DTHSWEMVGK…NTWNNTGHFE (138 aa). Positions 118-132 are enriched in basic and acidic residues; that stretch reads EEGKENRDRDRDYSR. A compositionally biased stretch (basic residues) spans 133–145; sequence RRGGPPRRGRGAS. Asymmetric dimethylarginine is present on residues Arg-187 and Arg-190. The span at 213–226 shows a compositional bias: low complexity; the sequence is NYGNSSGNTWNNTG. Ser-376, Ser-380, and Ser-436 each carry phosphoserine. Thr-445 carries the post-translational modification Phosphothreonine. Disordered stretches follow at residues 461 to 513, 550 to 676, and 689 to 814; these read AVAT…KKTS, SDYE…IPSL, and ANQH…LPPG. Phosphoserine occurs at positions 474, 487, 490, 491, and 497. Composition is skewed to low complexity over residues 494–505 and 554–589; these read QSSSPQPAQQKL and STPTTSASSSQAPSSLYTSTASESSSTVSSNQSQES. Positions 590 to 656 are enriched in polar residues; it reads GYQSGPIQST…TQLQTTQSVE (67 aa). 4 positions are modified to phosphoserine: Ser-624, Ser-625, Ser-628, and Ser-629. Residues 665 to 675 show a composition bias toward low complexity; that stretch reads SESPSTSSIPS. Residues 689-713 are compositionally biased toward polar residues; that stretch reads ANQHSSSLSGLSHTEEIPNTTTTQH. The segment covering 714 to 804 has biased composition (low complexity); the sequence is SSALSTQQNT…STRSSVATTS (91 aa). Ser-872 and Ser-879 each carry phosphoserine. Disordered regions lie at residues 885-921 and 1060-1107; these read FGRGDASSPAPATTLAQPQQNQTQTHHTTQQTFLNPA and QQPH…WGAN. Low complexity-rich tracts occupy residues 893–916 and 1073–1087; these read PAPATTLAQPQQNQTQTHHTTQQT and QDGQTGSGQRSQTSS. Residues 1088–1107 show a composition bias toward polar residues; that stretch reads IPQKPQTNKSAYNSYSWGAN.

Interacts with BMI1. Part of a complex consisting of UBAP2L, BMI1 and RNF2. Interacts with G3BP1 (via NTF2 domain); promoting stress granule formation.

The protein resides in the nucleus. Its subcellular location is the chromosome. The protein localises to the cytoplasm. It localises to the stress granule. Recruits the ubiquitination machinery to RNA polymerase II for polyubiquitination, removal and degradation, when the transcription-coupled nucleotide excision repair (TC-NER) machinery fails to resolve DNA damage. Plays an important role in the activity of long-term repopulating hematopoietic stem cells (LT-HSCs). Is a regulator of stress granule assembly, required for their efficient formation. Required for proper brain development and neocortex lamination. The chain is Ubiquitin-associated protein 2-like from Mus musculus (Mouse).